The sequence spans 591 residues: Adenine deaminase (591 aa).

The protein belongs to the metallo-dependent hydrolases superfamily. Adenine deaminase family. In terms of assembly, homodimer. The cofactor is Mn(2+).

The catalysed reaction is adenine + H2O + H(+) = hypoxanthine + NH4(+). In Edwardsiella ictaluri (strain 93-146), this protein is Adenine deaminase.